A 171-amino-acid chain; its full sequence is MTNFTFDGAHSSLEFQIKHLMVSKVKGSFDQFDVAVEGDINDFSTLKATATIIPSSINTKNEARDNHLKSGDFFGTDEFDKITFVTKSVSESKVVGDLTIKGITNEETFDVEFNGVSKNPMDGSQVTGVIVTGTINRENYGINFNQALETGGVMLGKDVKFEASAEFSISE.

This sequence belongs to the UPF0312 family.

This is UPF0312 protein MW2606 from Staphylococcus aureus (strain MW2).